The primary structure comprises 337 residues: Ribosomal RNA small subunit methyltransferase H (337 aa).

Residues 45-47 (GGH), Asp64, His91, Asp112, and Gln119 each bind S-adenosyl-L-methionine.

The protein belongs to the methyltransferase superfamily. RsmH family.

Its subcellular location is the cytoplasm. It catalyses the reaction cytidine(1402) in 16S rRNA + S-adenosyl-L-methionine = N(4)-methylcytidine(1402) in 16S rRNA + S-adenosyl-L-homocysteine + H(+). Specifically methylates the N4 position of cytidine in position 1402 (C1402) of 16S rRNA. The polypeptide is Ribosomal RNA small subunit methyltransferase H (Cutibacterium acnes (strain DSM 16379 / KPA171202) (Propionibacterium acnes)).